Consider the following 262-residue polypeptide: Regulatory protein RecX (262 aa).

It belongs to the RecX family.

It is found in the cytoplasm. Functionally, modulates RecA activity. In Photobacterium profundum (strain SS9), this protein is Regulatory protein RecX.